Consider the following 486-residue polypeptide: Flavin-dependent monooxygenase pboD (486 aa).

Positions 51, 65, and 124 each coordinate FAD. Residue Arg203 is part of the active site. Residues Asp344 and Gly357 each coordinate FAD.

It belongs to the paxM FAD-dependent monooxygenase family. The cofactor is FAD.

It functions in the pathway secondary metabolite biosynthesis. Functionally, flavin-dependent monooxygenase; part of the gene cluster that mediates the biosynthesis of protubonine B, a hydroxylated and diacetylated cyclo-L-Trp-L-Leu derivative. Within the pathway, pboD catalyzes the hydroxylation at C-3 of the indole ring of cyclo-L-Trp-L-Leu and subsequent formation of the pyrrolidine ring, eading to the production of protubonine D. PboD is also able to accept other cyclodipeptides (CDPs) as substrates, including cyclo-L-Trp-L-Trp, cyclo-L-Trp-L-Tyr, cyclo-L-Trp-L-Phe, cyclo-L-Trp-L-Met, cyclo-L-Trp-L-Ala, cyclo-L-Trp-L-Pro and cyclo-L-Trp-Gly. Assays with cyclo-L-Trp-L-Trp, cyclo-L-Trp-L-Tyr, cyclo-L-Trp-L-Phe show similar or even slightly higher conversion yields, compared with that of the natural substrate cyclo-L-Trp-L-Leu, whereas cyclo-L-Trp-L-Pro and cyclo-L-Trp-Gly are accepted by PboD but only with conversion yields of 10 and 4%, respectively. Cyclo-L-Trp-L-His is not accepted as a substrate. The first step of the protubonine B synthesis is performed by the nonribosomal peptide synthetase pboA that catalyzes the formation of cyclo-L-Trp-L-Leu by condensing L-Leu with L-Trp. The flavin-dependent monooxygenase pboD is responsible for hydroxylation at C-3 of the indole ring and subsequent formation of the pyrrolidine ring, leadind to protubonine D. Protubonine D is further diacetylated by two acetyltransferases, pboB and pboC, to form the final product protubonine B via protubonine C. In Aspergillus ustus, this protein is Flavin-dependent monooxygenase pboD.